We begin with the raw amino-acid sequence, 1052 residues long: Protein argonaute 14 (1052 aa).

A compositionally biased stretch (gly residues) spans 1–39; that stretch reads MASRGGDGLVGGGRGPLGGRDGRGRGPAGGRGGGRGGGH. Disordered regions lie at residues 1–127 and 170–194; these read MASR…TPAV and GGRP…APPS. Over residues 40 to 49 the composition is skewed to low complexity; that stretch reads PQQQQQQQPG. Gly residues-rich tracts occupy residues 50–59 and 66–81; these read YGRGDGGGRG and GVVG…GGRG. Residues 97–117 show a composition bias toward low complexity; it reads VRPAMAAAPAASTPGPVAVAA. Residues 173–183 show a composition bias toward pro residues; the sequence is PAPPAAPPAPI. The 117-residue stretch at 394 to 510 folds into the PAZ domain; the sequence is SVVEYVKNCL…LPMEVCTIVE (117 aa). A Piwi domain is found at 677 to 1009; sequence LLIVILPDVN…AAFRARYYDE (333 aa).

This sequence belongs to the argonaute family. Ago subfamily. As to expression, expressed in seeds.

In terms of biological role, probably involved in the RNA silencing pathway. May bind to short RNAs such as microRNAs (miRNAs) or short interfering RNAs (siRNAs), and represses the translation of mRNAs which are complementary to them. This Oryza sativa subsp. japonica (Rice) protein is Protein argonaute 14 (AGO14).